The following is a 419-amino-acid chain: Imidazolonepropionase (419 aa).

The Fe(3+) site is built by H87 and H89. 2 residues coordinate Zn(2+): H87 and H89. 4-imidazolone-5-propanoate contacts are provided by R96, Y159, and H192. Y159 provides a ligand contact to N-formimidoyl-L-glutamate. H257 contacts Fe(3+). Zn(2+) is bound at residue H257. Q260 is a 4-imidazolone-5-propanoate binding site. A Fe(3+)-binding site is contributed by D332. Zn(2+) is bound at residue D332. The N-formimidoyl-L-glutamate site is built by N334 and G336. S337 contacts 4-imidazolone-5-propanoate.

Belongs to the metallo-dependent hydrolases superfamily. HutI family. It depends on Zn(2+) as a cofactor. Requires Fe(3+) as cofactor.

It localises to the cytoplasm. The enzyme catalyses 4-imidazolone-5-propanoate + H2O = N-formimidoyl-L-glutamate. The protein operates within amino-acid degradation; L-histidine degradation into L-glutamate; N-formimidoyl-L-glutamate from L-histidine: step 3/3. Functionally, catalyzes the hydrolytic cleavage of the carbon-nitrogen bond in imidazolone-5-propanoate to yield N-formimidoyl-L-glutamate. It is the third step in the universal histidine degradation pathway. The chain is Imidazolonepropionase from Alteromonas mediterranea (strain DSM 17117 / CIP 110805 / LMG 28347 / Deep ecotype).